A 239-amino-acid polypeptide reads, in one-letter code: Prolyl hydroxylase EGLN3 (239 aa).

The interval 62-73 is beta(2)beta(3) 'finger-like' loop; it reads AGPRAGVSKRHL. The interval 88–104 is required for interaction with ADRB2; sequence CEAINFLLSLIDRLVLY. In terms of domain architecture, Fe2OG dioxygenase spans 116-214; sequence ERSKAMVACY…RYAMTVWYFD (99 aa). Positions 135, 137, and 196 each coordinate Fe cation. 2-oxoglutarate is bound at residue Arg-205.

Interacts with ADRB2; the interaction hydroxylates ADRB2 facilitating its ubiquitination by the VHL-E3 ligase complex. Interacts with PAX2; the interaction targets PAX2 for destruction. Interacts with PKM; the interaction hydroxylates PKM in hypoxia. Interacts with WDR83; the interaction leads to almost complete elimination of HIF-mediated reporter activity. Interacts with BCL2 (via its BH4 domain); the interaction disrupts the BAX-BCL4 complex inhibiting the anti-apoptotic activity of BCL2. Fe(2+) serves as cofactor. The cofactor is L-ascorbate. Post-translationally, ubiquitinated by SIAH1 and/or SIAH2 in response to the unfolded protein response (UPR), leading to its degradation. As to expression, highly expressed in vascular smooth muscle. Moderately expressed in esophagus, stomach, small bowel and aorta. Low levels in tail and kidney. Expression also in pheochromocytoma cell line PC-12.

The protein localises to the nucleus. Its subcellular location is the cytoplasm. It carries out the reaction L-prolyl-[protein] + 2-oxoglutarate + O2 = trans-4-hydroxy-L-prolyl-[protein] + succinate + CO2. The enzyme catalyses L-prolyl-[hypoxia-inducible factor alpha subunit] + 2-oxoglutarate + O2 = trans-4-hydroxy-L-prolyl-[hypoxia-inducible factor alpha subunit] + succinate + CO2. Prolyl hydroxylase that mediates hydroxylation of proline residues in target proteins, such as PKM, TELO2, ATF4 and HIF1A. Target proteins are preferentially recognized via a LXXLAP motif. Cellular oxygen sensor that catalyzes, under normoxic conditions, the post-translational formation of 4-hydroxyproline in hypoxia-inducible factor (HIF) alpha proteins. Hydroxylates a specific proline found in each of the oxygen-dependent degradation (ODD) domains (N-terminal, NODD, and C-terminal, CODD) of HIF1A. Also hydroxylates HIF2A. Has a preference for the CODD site for both HIF1A and HIF2A. Hydroxylation on the NODD site by EGLN3 appears to require prior hydroxylation on the CODD site. Hydroxylated HIFs are then targeted for proteasomal degradation via the von Hippel-Lindau ubiquitination complex. Under hypoxic conditions, the hydroxylation reaction is attenuated allowing HIFs to escape degradation resulting in their translocation to the nucleus, heterodimerization with HIF1B, and increased expression of hypoxy-inducible genes. ELGN3 is the most important isozyme in limiting physiological activation of HIFs (particularly HIF2A) in hypoxia. Also hydroxylates PKM in hypoxia, limiting glycolysis. Under normoxia, hydroxylates and regulates the stability of ADRB2. Regulator of cardiomyocyte and neuronal apoptosis. In cardiomyocytes, inhibits the anti-apoptotic effect of BCL2 by disrupting the BAX-BCL2 complex. In neurons, has a NGF-induced proapoptotic effect, probably through regulating CASP3 activity. Also essential for hypoxic regulation of neutrophilic inflammation. Plays a crucial role in DNA damage response (DDR) by hydroxylating TELO2, promoting its interaction with ATR which is required for activation of the ATR/CHK1/p53 pathway. Also mediates hydroxylation of ATF4, leading to decreased protein stability of ATF4. The sequence is that of Prolyl hydroxylase EGLN3 (Egln3) from Rattus norvegicus (Rat).